The following is a 272-amino-acid chain: Protein alcS (272 aa).

The span at 1-14 shows a compositional bias: polar residues; the sequence is MDTEQGLKNHTAKT. The tract at residues 1–21 is disordered; it reads MDTEQGLKNHTAKTSPHDETA. 6 helical membrane passes run 63 to 83, 91 to 111, 122 to 144, 164 to 184, 192 to 212, and 225 to 245; these read PLALGGFVITTTPLSCCLMGW, IAFTGPIIFLGGGLLVLTSIL, VVFGTIGAFWFAFGCTMTPAFNA, FLNTYAFLFIWMGVLMLIFLA, VYVAIFTTLTLVFGFLSGAYW, and LVVAAGACLFVASMLGFYLLV.

This sequence belongs to the acetate uptake transporter (AceTr) (TC 2.A.96) family.

It is found in the cell membrane. The protein resides in the cell septum. This is Protein alcS from Aspergillus fumigatus (strain CBS 144.89 / FGSC A1163 / CEA10) (Neosartorya fumigata).